Consider the following 245-residue polypeptide: UDP-N-acetyl-D-mannosaminuronic acid transferase (245 aa).

The protein belongs to the glycosyltransferase 26 family.

It catalyses the reaction UDP-N-acetyl-alpha-D-mannosaminouronate + N-acetyl-alpha-D-glucosaminyl-di-trans,octa-cis-undecaprenyl diphosphate = beta-D-ManNAcA-(1-&gt;4)-alpha-D-GlcNAc-di-trans,octa-cis-undecaprenyl diphosphate + UDP + H(+). It functions in the pathway bacterial outer membrane biogenesis; enterobacterial common antigen biosynthesis. In terms of biological role, catalyzes the synthesis of Und-PP-GlcNAc-ManNAcA (Lipid II), the second lipid-linked intermediate involved in enterobacterial common antigen (ECA) synthesis. This Proteus mirabilis (strain HI4320) protein is UDP-N-acetyl-D-mannosaminuronic acid transferase.